The primary structure comprises 440 residues: 3-phosphoshikimate 1-carboxyvinyltransferase (440 aa).

3 residues coordinate 3-phosphoshikimate: lysine 25, serine 26, and arginine 30. Residue lysine 25 coordinates phosphoenolpyruvate. Positions 96 and 124 each coordinate phosphoenolpyruvate. Residues serine 168, glutamine 169, aspartate 310, and lysine 337 each contribute to the 3-phosphoshikimate site. Residue glutamine 169 coordinates phosphoenolpyruvate. Aspartate 310 serves as the catalytic Proton acceptor. The phosphoenolpyruvate site is built by arginine 341, arginine 382, and lysine 409.

Belongs to the EPSP synthase family. As to quaternary structure, monomer.

It localises to the cytoplasm. It carries out the reaction 3-phosphoshikimate + phosphoenolpyruvate = 5-O-(1-carboxyvinyl)-3-phosphoshikimate + phosphate. It participates in metabolic intermediate biosynthesis; chorismate biosynthesis; chorismate from D-erythrose 4-phosphate and phosphoenolpyruvate: step 6/7. Catalyzes the transfer of the enolpyruvyl moiety of phosphoenolpyruvate (PEP) to the 5-hydroxyl of shikimate-3-phosphate (S3P) to produce enolpyruvyl shikimate-3-phosphate and inorganic phosphate. This is 3-phosphoshikimate 1-carboxyvinyltransferase from Chlamydia trachomatis serovar D (strain ATCC VR-885 / DSM 19411 / UW-3/Cx).